A 214-amino-acid chain; its full sequence is Thymidylate kinase (214 aa).

Position 7 to 14 (7 to 14 (GIDGAGKS)) interacts with ATP.

This sequence belongs to the thymidylate kinase family.

The catalysed reaction is dTMP + ATP = dTDP + ADP. Phosphorylation of dTMP to form dTDP in both de novo and salvage pathways of dTTP synthesis. This is Thymidylate kinase from Chlorobium luteolum (strain DSM 273 / BCRC 81028 / 2530) (Pelodictyon luteolum).